The chain runs to 526 residues: Peptide chain release factor 3 (526 aa).

Residues 9–277 form the tr-type G domain; it reads DRRRTFAIVS…TFVDHAPAPL (269 aa). GTP contacts are provided by residues 18 to 25, 86 to 90, and 140 to 143; these read SHPDAGKT, DTPGH, and NKLD.

It belongs to the TRAFAC class translation factor GTPase superfamily. Classic translation factor GTPase family. PrfC subfamily.

Its subcellular location is the cytoplasm. Functionally, increases the formation of ribosomal termination complexes and stimulates activities of RF-1 and RF-2. It binds guanine nucleotides and has strong preference for UGA stop codons. It may interact directly with the ribosome. The stimulation of RF-1 and RF-2 is significantly reduced by GTP and GDP, but not by GMP. The protein is Peptide chain release factor 3 of Geobacter sulfurreducens (strain ATCC 51573 / DSM 12127 / PCA).